A 60-amino-acid chain; its full sequence is MAVPKRRMSRSNTRSRRSQWKAAAPTLITCPNRACGQKTLPHIACPSCGTYKGRQVTAAV.

The span at Met-1–Gln-19 shows a compositional bias: basic residues. Residues Met-1–Lys-21 form a disordered region.

Belongs to the bacterial ribosomal protein bL32 family.

The sequence is that of Large ribosomal subunit protein bL32A from Nocardia farcinica (strain IFM 10152).